Here is a 202-residue protein sequence, read N- to C-terminus: LexA repressor (202 aa).

The H-T-H motif DNA-binding region spans 28-48 (RAEIAQRLGFRSPNAAEEHLK). Catalysis depends on for autocatalytic cleavage activity residues serine 119 and lysine 156.

The protein belongs to the peptidase S24 family. Homodimer.

The enzyme catalyses Hydrolysis of Ala-|-Gly bond in repressor LexA.. Its function is as follows. Represses a number of genes involved in the response to DNA damage (SOS response), including recA and lexA. Binds to the 16 bp palindromic sequence 5'-CTGTATATATATACAG-3'. In the presence of single-stranded DNA, RecA interacts with LexA causing an autocatalytic cleavage which disrupts the DNA-binding part of LexA, leading to derepression of the SOS regulon and eventually DNA repair. This chain is LexA repressor, found in Escherichia fergusonii (strain ATCC 35469 / DSM 13698 / CCUG 18766 / IAM 14443 / JCM 21226 / LMG 7866 / NBRC 102419 / NCTC 12128 / CDC 0568-73).